The following is a 185-amino-acid chain: Ovomucoid (185 aa).

3 consecutive Kazal-like domains span residues 1–63, 64–128, and 131–185; these read VEVD…ECRE, AVPM…ECRK, and AAVS…FGKC. Disulfide bonds link Cys5–Cys43, Cys22–Cys40, Cys30–Cys61, Cys69–Cys108, Cys86–Cys105, Cys94–Cys126, Cys137–Cys167, Cys145–Cys164, and Cys153–Cys185. Asn174 is a glycosylation site (N-linked (GlcNAc...) asparagine).

Its subcellular location is the secreted. This chain is Ovomucoid, found in Meleagris gallopavo (Wild turkey).